A 751-amino-acid chain; its full sequence is MPYNPKEIEQWYKENYKYFFGEGDKILIIDTPPPYPAPLWHIGAALSYALQDFIARGFRKLGYKVIFPEGFDGNGIPIEMYLEKYEKIPFGSIDREEYIKKCRQILDSWREKMDKILKDLLLSMDFEHRYNTDDPEYRALTQKTFAELWEKGLIYEAEYPINYCPHCKTAIADAEIERKIKKTKLVYIKFKIKDSDDYITVATTRPELLGACKAIIVHPDDERYKKYHNKIAIVPYYNREIPIIPHKMADPNFGTGAVMICSYGDWVDVQIFRELQLKPEKIIDENGRLTIEPVKGLTTKEGREKMIEVLKQLGVVEKIEEIEHSVPVHERCETEIEIIPMKEFYLKQLPFKEEIKKLSKEIEFIPERYRKNLENWIDSITIDWPISRRRWYATEIPLWYCPKCGYIHVAKDGKYHQPWKEEMVCPRCNTKMVGETRVLDTWMDSSITIYYLIKKYSKILGIDEEGLFNNYTLRPQGYEIIRTWLYYTLLRVYQLTGKKAFDFVVINGMGLDKHGRKMSKRYGNVIEPETLLEKYGADTLRYWFAMEISIGEDYRINEQKIAGIMKFMNKVWNIANYISQYQYRETQNLKPTDEWIINYVKYLENKAIEYIRNFEFNKLARELYRFVWDVFANHYIELTKKRAKNNDDSAIYALYFVFERVLNMLSIFSPGIAKYLAKKLYNKDIEKEKLKYWGKVRLDLLYKGEKLIEFNNYVWKLKTSQGKKLKDPISIEIPKELEIFKEDLILLHNIQ.

Lys520 contributes to the ATP binding site.

This sequence belongs to the class-I aminoacyl-tRNA synthetase family. ValS type 2 subfamily.

The protein resides in the cytoplasm. It carries out the reaction tRNA(Val) + L-valine + ATP = L-valyl-tRNA(Val) + AMP + diphosphate. Catalyzes the attachment of valine to tRNA(Val). As ValRS can inadvertently accommodate and process structurally similar amino acids such as threonine, to avoid such errors, it has a 'posttransfer' editing activity that hydrolyzes mischarged Thr-tRNA(Val) in a tRNA-dependent manner. The sequence is that of Valine--tRNA ligase (valS) from Nanoarchaeum equitans (strain Kin4-M).